The primary structure comprises 108 residues: UPF0060 membrane protein Rsph17029_0436 (108 aa).

4 consecutive transmembrane segments (helical) span residues 5–25 (LAAY…VWAW), 32–52 (ALWL…LALT), 62–82 (AVYG…VEGV), and 86–106 (RWDM…LWAP).

The protein belongs to the UPF0060 family.

It is found in the cell inner membrane. The sequence is that of UPF0060 membrane protein Rsph17029_0436 from Cereibacter sphaeroides (strain ATCC 17029 / ATH 2.4.9) (Rhodobacter sphaeroides).